The following is a 349-amino-acid chain: [LysW]-L-2-aminoadipate/[LysW]-L-glutamate phosphate reductase (349 aa).

10–13 is an NADP(+) binding site; it reads SGYT. Cys-150 is a catalytic residue. Residue Asn-316 coordinates NADP(+).

It belongs to the NAGSA dehydrogenase family. Type 1 subfamily. LysY sub-subfamily.

The protein resides in the cytoplasm. It carries out the reaction [amino-group carrier protein]-C-terminal-N-(1-carboxy-5-oxopentan-1-yl)-L-glutamine + phosphate + NADP(+) = [amino-group carrier protein]-C-terminal-N-(1-carboxy-5-phosphooxy-5-oxopentan-1-yl)-L-glutamine + NADPH + H(+). The catalysed reaction is [amino-group carrier protein]-C-terminal-gamma-(L-glutamyl-5-semialdehyde)-L-glutamate + phosphate + NADP(+) = [amino-group carrier protein]-C-terminal-gamma-(5-phospho-L-glutamyl)-L-glutamate + NADPH + H(+). It participates in amino-acid biosynthesis; L-lysine biosynthesis via AAA pathway; L-lysine from L-alpha-aminoadipate (Thermus route): step 3/5. It functions in the pathway amino-acid biosynthesis; L-arginine biosynthesis. In terms of biological role, involved in both the arginine and lysine biosynthetic pathways. The protein is [LysW]-L-2-aminoadipate/[LysW]-L-glutamate phosphate reductase of Sulfurisphaera tokodaii (strain DSM 16993 / JCM 10545 / NBRC 100140 / 7) (Sulfolobus tokodaii).